We begin with the raw amino-acid sequence, 199 residues long: MAFELPKLPYAFDALEPHIDKETMEIHHDKHHNTYVTKLNAVVEGTDLEAKSIEEIVANLDSVPSDIQTAVRNNGGGHLNHSLFWELLTPNSEEKGEVVEKIKEQWGSLDEFKKEFADKAAARFGSGWAWLVVNNGQLEIVTTPNQDNPLTEGKTPILGLDVWEHAYYLKYQNKRPDYISAFWNVVNWEKVDELYNAAK.

Fe(3+) contacts are provided by His27, His81, Asp161, and His165. 4 residues coordinate Mn(2+): His27, His81, Asp161, and His165.

It belongs to the iron/manganese superoxide dismutase family. As to quaternary structure, homodimer. It depends on Mn(2+) as a cofactor. Fe(3+) serves as cofactor.

The catalysed reaction is 2 superoxide + 2 H(+) = H2O2 + O2. In terms of biological role, destroys superoxide anion radicals which are normally produced within the cells and which are toxic to biological systems. Catalyzes the dismutation of superoxide anion radicals into O2 and H2O2 by successive reduction and oxidation of the transition metal ion at the active site. This is Superoxide dismutase [Mn/Fe] (sodA) from Staphylococcus epidermidis.